The following is a 395-amino-acid chain: Chaperone protein DnaJ 1 (395 aa).

Positions 10 to 75 (DFYQELGVSS…AKRKEYDETR (66 aa)) constitute a J domain. The segment at 164-242 (GVAMPLRLTS…CKGTGVTTRT (79 aa)) adopts a CR-type zinc-finger fold. Zn(2+) contacts are provided by C177, C180, C194, C197, C216, C219, C230, and C233. 4 CXXCXGXG motif repeats span residues 177–184 (CTNCHGSG), 194–201 (CPTCNGSG), 216–223 (CTDCRGSG), and 230–237 (CEECKGTG).

Belongs to the DnaJ family. As to quaternary structure, homodimer. Zn(2+) is required as a cofactor.

It localises to the cytoplasm. Its function is as follows. Participates actively in the response to hyperosmotic and heat shock by preventing the aggregation of stress-denatured proteins and by disaggregating proteins, also in an autonomous, DnaK-independent fashion. Unfolded proteins bind initially to DnaJ; upon interaction with the DnaJ-bound protein, DnaK hydrolyzes its bound ATP, resulting in the formation of a stable complex. GrpE releases ADP from DnaK; ATP binding to DnaK triggers the release of the substrate protein, thus completing the reaction cycle. Several rounds of ATP-dependent interactions between DnaJ, DnaK and GrpE are required for fully efficient folding. Also involved, together with DnaK and GrpE, in the DNA replication of plasmids through activation of initiation proteins. The sequence is that of Chaperone protein DnaJ 1 from Mycobacterium bovis (strain ATCC BAA-935 / AF2122/97).